The primary structure comprises 295 residues: Hepatic leukemia factor (295 aa).

A compositionally biased stretch (basic and acidic residues) spans 34 to 52 (LHPEDAFSKDRDKGKKLDD). Disordered stretches follow at residues 34–69 (LHPEDAFSKDRDKGKKLDDGSNSPTVPQSAFLGPTL) and 93–160 (SENG…NRNT). The bZIP domain occupies 225 to 288 (DDKYWARRRK…GKCKNILAKY (64 aa)). The basic motif stretch occupies residues 227-247 (KYWARRRKNNMAAKRSRDARR). Residues 248 to 255 (LKENQIAI) are leucine-zipper.

The protein belongs to the bZIP family. PAR subfamily. In terms of assembly, binds DNA specifically as homodimer or heterodimer with other PAR factors. Isoform HLF43 is abundant in brain, liver and kidney. Isoform HLF36 is expressed only in the liver. Both isoforms accumulate in the liver with different circadian amplitudes. Isoform HLF36 reaches peak expression levels between 8 and 12 p.m. Isoform HLF43 displays a more pronounced fluctuation through the day.

The protein resides in the nucleus. The chain is Hepatic leukemia factor (Hlf) from Rattus norvegicus (Rat).